The following is a 224-amino-acid chain: LRP chaperone MESD (224 aa).

The N-terminal stretch at 1-29 is a signal peptide; that stretch reads MAASRWLRAVLLFLCASDLLLLPPPNAYA. Residues 1–155 form a chaperone domain region; the sequence is MAASRWLRAV…DRAIFMLRDG (155 aa). 2 disordered regions span residues 28–49 and 178–224; these read YAAD…IRDY and GQMY…REDL. Positions 156-195 are escort domain; that stretch reads SYAWEIKDFLVSQDRCAEVTLEGQMYPGKGGGSKEKNKTK. The span at 187–224 shows a compositional bias: basic and acidic residues; sequence GSKEKNKTKPEKAKKKEGDPKPRASKEDNRAGSRREDL. Asparagine 192 is a glycosylation site (N-linked (GlcNAc...) asparagine). Positions 221–224 match the Prevents secretion from ER motif; the sequence is REDL.

Belongs to the MESD family. In terms of assembly, monomer. Interacts with LRP5; the interaction prevents LRP5 from forming aggregates and chaperones LRP6 to the plasma membrane. Interacts with LRP6; the interaction prevents LRP6 from forming aggregates and chaperones LRP6 to the plasma membrane. Interacts with LRP4; the interaction promotes glycosylation of LRP4 and its cell-surface expression. In terms of tissue distribution, expressed in many tissues, but not in skeletal muscles. In the retina expressed in retinal ganglion cells, inner and outer plexiform layers, photoreceptor inner and outer segments and retinal pigment epithelium (at protein level).

Its subcellular location is the endoplasmic reticulum. In terms of biological role, chaperone specifically assisting the folding of beta-propeller/EGF modules within the family of low-density lipoprotein receptors (LDLRs). Acts as a modulator of the Wnt pathway through chaperoning the coreceptors of the canonical Wnt pathway, LRP5 and LRP6, to the plasma membrane. Essential for specification of embryonic polarity and mesoderm induction. Plays an essential role in neuromuscular junction (NMJ) formation by promoting cell-surface expression of LRP4. May regulate phagocytosis of apoptotic retinal pigment epithelium (RPE) cells. The polypeptide is LRP chaperone MESD (Mus musculus (Mouse)).